Reading from the N-terminus, the 63-residue chain is Potassium channel toxin Sp4 (63 aa).

Residues 1 to 20 (MNKVHFALFLLVLTVLAVSG) form the signal peptide. 3 disulfide bridges follow: Cys31–Cys53, Cys38–Cys58, and Cys42–Cys60.

It belongs to the long chain scorpion toxin family. Class 2 subfamily. Expressed by the venom gland.

The protein resides in the secreted. Its function is as follows. This recombinant toxin selectively inhibits mouse voltage-gated potassium channel Kv1.3/KCNA3 (IC(50)=24.73 nM). The sequence is that of Potassium channel toxin Sp4 from Scorpiops pococki (Scorpion).